Here is a 32-residue protein sequence, read N- to C-terminus: Dermaseptin-8 (32 aa).

Gln32 carries the glutamine amide modification.

As to expression, expressed by the skin glands.

The protein localises to the secreted. Its function is as follows. Antimicrobial peptide, active against the Gram-positive bacterium S.aureus, and the Gram-negative bacteriun E.coli. Has hemolytic activity at 432 uM. This Phyllomedusa tarsius (Brownbelly leaf frog) protein is Dermaseptin-8.